Consider the following 312-residue polypeptide: Olfactory receptor 7G3 (312 aa).

Residues 1 to 25 (MKAGNFSDTPEFFLLGLSGDPELQP) are Extracellular-facing. The N-linked (GlcNAc...) asparagine glycan is linked to Asn-5. A helical membrane pass occupies residues 26 to 46 (ILFMLFLSMYLATMLGNLLII). Over 47–54 (LAVNSDSH) the chain is Cytoplasmic. Residues 55 to 75 (LHTPMYFLLSILSLVDICFTS) traverse the membrane as a helical segment. The Extracellular portion of the chain corresponds to 76–99 (TTMPKMLVNIQAQAQSINYTGCLT). N-linked (GlcNAc...) asparagine glycosylation is present at Asn-93. Cys-97 and Cys-189 form a disulfide bridge. The chain crosses the membrane as a helical span at residues 100 to 120 (QICFVLVFVGLENGILVMMAY). The Cytoplasmic segment spans residues 121-139 (DRFVAICHPLRYNVIMNPK). The helical transmembrane segment at 140 to 160 (LCGLLLLLSFIVSVLDALLHT) threads the bilayer. Residues 161 to 197 (LMVLQLTFCIDLEIPHFFCELAHILKLACSDVLINNI) are Extracellular-facing. The chain crosses the membrane as a helical span at residues 198–217 (LVYLVTSLLGVVPLSGIIFS). At 218–237 (YTRIVSSVMKIPSAGGKYKA) the chain is on the cytoplasmic side. A helical membrane pass occupies residues 238-258 (FSICGSHLIVVSLFYGTGFGV). The Extracellular segment spans residues 259-271 (YLSSGATHSSRKG). A helical transmembrane segment spans residues 272–292 (AIASVMYTVVTPMLNPLIYSL). Topologically, residues 293-312 (RNKDMLKALRKLISRIPSFH) are cytoplasmic.

The protein belongs to the G-protein coupled receptor 1 family.

The protein resides in the cell membrane. In terms of biological role, odorant receptor. The sequence is that of Olfactory receptor 7G3 (OR7G3) from Homo sapiens (Human).